Reading from the N-terminus, the 307-residue chain is Ribonuclease Z (307 aa).

Residues H63, H65, D67, H68, H143, D213, and H271 each coordinate Zn(2+). D67 functions as the Proton acceptor in the catalytic mechanism.

It belongs to the RNase Z family. Homodimer. Zn(2+) is required as a cofactor.

The enzyme catalyses Endonucleolytic cleavage of RNA, removing extra 3' nucleotides from tRNA precursor, generating 3' termini of tRNAs. A 3'-hydroxy group is left at the tRNA terminus and a 5'-phosphoryl group is left at the trailer molecule.. In terms of biological role, zinc phosphodiesterase, which displays some tRNA 3'-processing endonuclease activity. Probably involved in tRNA maturation, by removing a 3'-trailer from precursor tRNA. The sequence is that of Ribonuclease Z from Lactococcus lactis subsp. lactis (strain IL1403) (Streptococcus lactis).